A 524-amino-acid chain; its full sequence is Phosphoenolpyruvate carboxykinase (ATP) (524 aa).

Substrate is bound by residues Arg-52, Tyr-188, and Lys-194. Residues Lys-194, His-213, and 229–237 each bind ATP; that span reads GLSGTGKTT. Mn(2+) contacts are provided by Lys-194 and His-213. Position 250 (Asp-250) interacts with Mn(2+). Residues Glu-278, Arg-314, and Thr-439 each coordinate ATP. Residue Arg-314 coordinates substrate.

Belongs to the phosphoenolpyruvate carboxykinase (ATP) family. Mn(2+) is required as a cofactor.

The protein localises to the cytoplasm. It catalyses the reaction oxaloacetate + ATP = phosphoenolpyruvate + ADP + CO2. The protein operates within carbohydrate biosynthesis; gluconeogenesis. Functionally, involved in the gluconeogenesis. Catalyzes the conversion of oxaloacetate (OAA) to phosphoenolpyruvate (PEP) through direct phosphoryl transfer between the nucleoside triphosphate and OAA. This is Phosphoenolpyruvate carboxykinase (ATP) from Campylobacter jejuni subsp. jejuni serotype O:23/36 (strain 81-176).